A 363-amino-acid polypeptide reads, in one-letter code: Type 3 secretion system translocon protein SctB (363 aa).

A compositionally biased stretch (polar residues) spans 1 to 16 (MEIQNTKPTQTLYTDI). Positions 1–30 (MEIQNTKPTQTLYTDISTKQTQSSSETQKS) are disordered. Over residues 17-30 (STKQTQSSSETQKS) the composition is skewed to low complexity. Residues 33 to 73 (YQQIAAHIPLNVGKNPVLTTTLNDDQLLKLSEQVQHDSEII) form an ipgC chaperone binding domain region. A helical transmembrane segment spans residues 99–120 (ISSLSSNAVSLIISVAVLLSAL).

This sequence belongs to the SctB/SipC family. In terms of assembly, the core secretion machinery of the T3SS is composed of approximately 20 different proteins, including cytoplasmic components, a base, an export apparatus and a needle. This subunit is involved in the formation of a pore, called the translocon, in host membrane. Interacts with IpaB/SctE. Interacts with the molecular chaperone IpgC, which prevents premature association with IpaB/SctE within the cytoplasm of Shigella cells. Does not interact with CDC42 or RAC1 GTPases in vitro.

It localises to the secreted. The protein resides in the host membrane. With respect to regulation, interaction with the membrane is affected by the pH. Component of the type III secretion system (T3SS), also called injectisome, which is used to inject bacterial effector proteins into eukaryotic host cells. IpaB/SctE and IpaC/SctB are inserted into the host membrane where they form a pore and allow the translocation of effector proteins into the cytosol of target cells. Induction and secretion of IpaC/SctB comprise the final step in triggering the induction of full type III secretion. In terms of biological role, required for efficient dissemination. Necessary for lysis of the two cellular membranes that surround bacteria in protrusions during cell-to-cell spread. Contribute to actin nucleation in vitro, which may be a necessary step in Shigella invasion. The protein is Type 3 secretion system translocon protein SctB of Shigella flexneri.